Reading from the N-terminus, the 204-residue chain is Large ribosomal subunit protein eL15 (204 aa).

The tract at residues 161–180 (MRGLTSAGKKSRGLGKGHKF) is disordered. Positions 169 to 180 (KKSRGLGKGHKF) are enriched in basic residues.

The protein belongs to the eukaryotic ribosomal protein eL15 family. Component of the large ribosomal subunit.

The protein localises to the cytoplasm. Its function is as follows. Component of the large ribosomal subunit. The ribosome is a large ribonucleoprotein complex responsible for the synthesis of proteins in the cell. This chain is Large ribosomal subunit protein eL15 (rpl15), found in Ictalurus punctatus (Channel catfish).